The primary structure comprises 101 residues: Large ribosomal subunit protein eL30 (101 aa).

This sequence belongs to the eukaryotic ribosomal protein eL30 family.

This is Large ribosomal subunit protein eL30 from Pyrobaculum neutrophilum (strain DSM 2338 / JCM 9278 / NBRC 100436 / V24Sta) (Thermoproteus neutrophilus).